Here is a 1260-residue protein sequence, read N- to C-terminus: Methionine synthase (1260 aa).

The 321-residue stretch at 13–333 folds into the Hcy-binding domain; the sequence is FGIIRKILSE…DHIRAFCNAI (321 aa). Residues cysteine 255, cysteine 318, and cysteine 319 each coordinate Zn(2+). A Pterin-binding domain is found at 364-625; it reads FVNVGERCNV…IPKDLLKLVE (262 aa). Residues 655–749 enclose the B12-binding N-terminal domain; that stretch reads EVEEWRNKPV…FMEEEKRLKR (95 aa). Methylcob(III)alamin is bound by residues glutamate 699, 775-779, histidine 778, serine 823, threonine 827, and alanine 879; that span reads GDVHD. Residues 766-883 form the B12-binding domain; it reads GVVVLATVKG…VHVLDASRSV (118 aa). The 341-residue stretch at 916 to 1256 folds into the AdoMet activation domain; that stretch reads SLKDRKYTSL…LSSILSYDRL (341 aa). Residues aspartate 966, arginine 1163, and 1218–1219 contribute to the S-adenosyl-L-methionine site; that span reads YF.

Belongs to the vitamin-B12 dependent methionine synthase family. The cofactor is methylcob(III)alamin. It depends on Zn(2+) as a cofactor.

The catalysed reaction is (6S)-5-methyl-5,6,7,8-tetrahydrofolate + L-homocysteine = (6S)-5,6,7,8-tetrahydrofolate + L-methionine. Its pathway is amino-acid biosynthesis; L-methionine biosynthesis via de novo pathway; L-methionine from L-homocysteine (MetH route): step 1/1. Functionally, catalyzes the transfer of a methyl group from methyl-cobalamin to homocysteine, yielding enzyme-bound cob(I)alamin and methionine. Subsequently, remethylates the cofactor using methyltetrahydrofolate. The sequence is that of Methionine synthase (mtr) from Dictyostelium discoideum (Social amoeba).